The primary structure comprises 290 residues: RIO-type serine/threonine-protein kinase Rio1 (290 aa).

The tract at residues 1-22 (MTDEFGMVEPQEGEAFGDEWEE) is disordered. Residues 11-22 (QEGEAFGDEWEE) are compositionally biased toward acidic residues. Positions 79-290 (DAFGGPISTG…DEGEDGDGDE (212 aa)) constitute a Protein kinase domain. ATP is bound by residues 85–93 (ISTGKEANV), lysine 107, glutamate 175, and valine 177. Catalysis depends on aspartate 218, which acts as the Proton acceptor. 2 residues coordinate Mg(2+): asparagine 223 and aspartate 235. Aspartate 235 serves as the catalytic 4-aspartylphosphate intermediate.

The protein belongs to the protein kinase superfamily. RIO-type Ser/Thr kinase family. Requires Mg(2+) as cofactor. The cofactor is Mn(2+). Post-translationally, autophosphorylated.

It carries out the reaction L-seryl-[protein] + ATP = O-phospho-L-seryl-[protein] + ADP + H(+). The enzyme catalyses L-threonyl-[protein] + ATP = O-phospho-L-threonyl-[protein] + ADP + H(+). The catalysed reaction is ATP + H2O = ADP + phosphate + H(+). Its function is as follows. Serine/threonine-protein kinase that is able to autophosphorylate as well as to phosphorylate proteasome subunit alpha 1 (PsmA1) in vitro. Despite the protein kinase domain is proposed to act predominantly as an ATPase. The protein is RIO-type serine/threonine-protein kinase Rio1 (rio1) of Haloferax volcanii (strain ATCC 29605 / DSM 3757 / JCM 8879 / NBRC 14742 / NCIMB 2012 / VKM B-1768 / DS2) (Halobacterium volcanii).